A 398-amino-acid chain; its full sequence is Selection and upkeep of intraepithelial T-cells protein 8 (398 aa).

Residues 1–25 (MMKPEFSHFFGFCVYFLFLQVMASS) form the signal peptide. One can recognise an Ig-like V-type domain in the interval 26-141 (EKLRVTTPTR…DVAIMNLNVT (116 aa)). Over 26–244 (EKLRVTTPTR…ANELFNQDYL (219 aa)) the chain is Extracellular. A disulfide bond links Cys49 and Cys123. Asn92 and Asn139 each carry an N-linked (GlcNAc...) asparagine glycan. The Ig-like C1-type domain maps to 142 to 233 (AVGLETEIHV…TGEEKQTSII (92 aa)). Cysteines 163 and 217 form a disulfide. A helical membrane pass occupies residues 245–265 (WVGIFPFSVLSLILFGVLPFI). Residues 266-288 (NSFFRSQGCASGCLSKCLPVVTS) lie on the Cytoplasmic side of the membrane. Residues 289–309 (WPVQIVHFLVCSGVLFAVYLP) traverse the membrane as a helical segment. Residues 310 to 331 (HRYRVSLSDPQFPLYNNWITEL) lie on the Extracellular side of the membrane. The helical transmembrane segment at 332 to 352 (LIVILFLTICFVLPITVLLLI) threads the bilayer. The Cytoplasmic segment spans residues 353 to 398 (KLSPTCLAKWEKNKDDIMDSQLGLGKAREASTLYEEQSRKSWEQEK).

This sequence belongs to the SKINT family. In terms of tissue distribution, expressed in skin, thymus, testis and, to a lower extent, bladder, brain, heart, kidney, mammary gland, small intestine and uterus.

Its subcellular location is the membrane. May act by engaging a cell surface molecule on immature T-cells in the embryonic thymus. This Mus musculus (Mouse) protein is Selection and upkeep of intraepithelial T-cells protein 8 (Skint8).